The primary structure comprises 777 residues: Rho guanine nucleotide exchange factor 38 (777 aa).

Thr-34 is modified (phosphothreonine). The segment at 35-72 (DTVVESSVSGDHSGTLRRSQSDRTEYNQKLQEKMTPQG) is disordered. Over residues 37-52 (VVESSVSGDHSGTLRR) the composition is skewed to polar residues. The span at 53 to 66 (SQSDRTEYNQKLQE) shows a compositional bias: basic and acidic residues. In terms of domain architecture, DH spans 94–285 (KREKIIKELI…KDINVNINEL (192 aa)). One can recognise a BAR domain in the interval 327–536 (LKILTRGESQ…QNQVLEEIQN (210 aa)). The SH3 1 domain occupies 582–645 (SAEELYQAKR…YSSFLKPYNP (64 aa)). The segment at 673-694 (PASDSVTGTSESSIGDSSSSLS) is disordered. The segment covering 679–694 (TGTSESSIGDSSSSLS) has biased composition (low complexity). An SH3 2 domain is found at 713 to 776 (VDEQIFYAVH…PANYLGKMTY (64 aa)).

Its function is as follows. May act as a guanine-nucleotide releasing factor. This is Rho guanine nucleotide exchange factor 38 (ARHGEF38) from Homo sapiens (Human).